Consider the following 161-residue polypeptide: UPF0178 protein Rsph17025_3122 (161 aa).

The protein belongs to the UPF0178 family.

The polypeptide is UPF0178 protein Rsph17025_3122 (Cereibacter sphaeroides (strain ATCC 17025 / ATH 2.4.3) (Rhodobacter sphaeroides)).